Consider the following 191-residue polypeptide: Putative glutathione-dependent formaldehyde-activating enzyme (191 aa).

Residues 20 to 166 (FPGGNLYCKC…FHSLGLETYD (147 aa)) enclose the CENP-V/GFA domain. 7 residues coordinate Zn(2+): Cys27, Cys29, Cys48, Cys50, Cys53, Cys95, and Cys98.

This sequence belongs to the Gfa family. Requires Zn(2+) as cofactor.

It catalyses the reaction S-(hydroxymethyl)glutathione = glutathione + formaldehyde. The protein operates within one-carbon metabolism; formaldehyde degradation; formate from formaldehyde (glutathione route): step 1/3. Its function is as follows. Catalyzes the condensation of formaldehyde and glutathione to S-hydroxymethylglutathione. The sequence is that of Putative glutathione-dependent formaldehyde-activating enzyme from Aspergillus niger (strain ATCC MYA-4892 / CBS 513.88 / FGSC A1513).